The chain runs to 214 residues: Adenylate kinase (214 aa).

Residue 10–15 (GAGKGT) participates in ATP binding. The NMP stretch occupies residues 30-59 (STGDMLRAAIKAGSELGNKAKAVMDAGQLV). Residues threonine 31, arginine 36, 57–59 (QLV), 85–88 (GFPR), and glutamine 92 contribute to the AMP site. Positions 122-159 (GRRVHSGSGRVYHLVYNPPKVEGKDDVSGDDLSIRPDD) are LID. ATP-binding positions include arginine 123 and 132 to 133 (VY). Arginine 156 and arginine 167 together coordinate AMP. Glutamine 200 is a binding site for ATP.

It belongs to the adenylate kinase family. Monomer.

Its subcellular location is the cytoplasm. The enzyme catalyses AMP + ATP = 2 ADP. It functions in the pathway purine metabolism; AMP biosynthesis via salvage pathway; AMP from ADP: step 1/1. In terms of biological role, catalyzes the reversible transfer of the terminal phosphate group between ATP and AMP. Plays an important role in cellular energy homeostasis and in adenine nucleotide metabolism. The chain is Adenylate kinase from Colwellia psychrerythraea (strain 34H / ATCC BAA-681) (Vibrio psychroerythus).